A 436-amino-acid polypeptide reads, in one-letter code: Cyclin-dependent kinase 11B (436 aa).

The Nuclear localization signal signature appears at 25 to 30 (VKKNRK). The interval 30–44 (KKLVKGLHRAGPPPE) is calmodulin-binding. The 286-residue stretch at 79–364 (FQCLNRIEEG…AEDGLKHEYF (286 aa)) folds into the Protein kinase domain. Residues 85 to 93 (IEEGTYGVV) and K108 contribute to the ATP site. A Phosphoserine; by CDK7 modification is found at S123. Phosphothreonine; by CDK7 is present on T129. D203 acts as the Proton acceptor in catalysis. S230 bears the Phosphoserine mark. Y235 is subject to Phosphotyrosine. A Phosphothreonine modification is found at T236. K282 is covalently cross-linked (Glycyl lysine isopeptide (Lys-Gly) (interchain with G-Cter in SUMO2)). A disordered region spans residues 383–406 (SEQQCVKRGTSPKPPEGGLGYSQL). Residue T392 is modified to Phosphothreonine. S393 carries the phosphoserine modification.

Belongs to the protein kinase superfamily. CMGC Ser/Thr protein kinase family. CDC2/CDKX subfamily. In terms of assembly, may interact PAK1 and RANBP9. p110C interacts with RNPS1. Interacts with CCND3. Interacts with CCNL1 and CCNL2. Forms complexes with pre-mRNA-splicing factors, including at least SRSF1, SRSF2 AND SRSF7/SLU7. Requires Mg(2+) as cofactor.

Its subcellular location is the cytoplasm. The protein localises to the nucleus membrane. The protein resides in the endomembrane system. It localises to the perinuclear region. It carries out the reaction L-seryl-[protein] + ATP = O-phospho-L-seryl-[protein] + ADP + H(+). The enzyme catalyses L-threonyl-[protein] + ATP = O-phospho-L-threonyl-[protein] + ADP + H(+). In terms of biological role, plays multiple roles in cell cycle progression, cytokinesis and apoptosis. Involved in pre-mRNA splicing in a kinase activity-dependent manner. May act as a negative regulator of normal cell cycle progression. The polypeptide is Cyclin-dependent kinase 11B (Cdk11b) (Rattus norvegicus (Rat)).